The sequence spans 396 residues: uncharacterized protein (396 aa).

This sequence belongs to the mycobacterial PPE family.

This is an uncharacterized protein from Mycobacterium tuberculosis (strain CDC 1551 / Oshkosh).